The following is a 35-amino-acid chain: Photosystem II reaction center protein T (35 aa).

A helical membrane pass occupies residues 3 to 23 (ALVYTFLLVGTLGIIFFAIFF).

The protein belongs to the PsbT family. In terms of assembly, PSII is composed of 1 copy each of membrane proteins PsbA, PsbB, PsbC, PsbD, PsbE, PsbF, PsbH, PsbI, PsbJ, PsbK, PsbL, PsbM, PsbT, PsbY, PsbZ, Psb30/Ycf12, at least 3 peripheral proteins of the oxygen-evolving complex and a large number of cofactors. It forms dimeric complexes.

The protein resides in the plastid. Its subcellular location is the chloroplast thylakoid membrane. In terms of biological role, found at the monomer-monomer interface of the photosystem II (PS II) dimer, plays a role in assembly and dimerization of PSII. PSII is a light-driven water plastoquinone oxidoreductase, using light energy to abstract electrons from H(2)O, generating a proton gradient subsequently used for ATP formation. The polypeptide is Photosystem II reaction center protein T (Chaetosphaeridium globosum (Charophycean green alga)).